Consider the following 381-residue polypeptide: Subtilisin amylosacchariticus (381 aa).

A signal peptide spans 1-29 (MRSKKLWISLLFALTLIFTMAFSNMSAQA). Positions 30-106 (AGKSSTEKKY…VEEDHIAHEY (77 aa)) are excised as a propeptide. Residues 38 to 103 (KYIVGFKQTM…VAYVEEDHIA (66 aa)) enclose the Inhibitor I9 domain. A Ca(2+)-binding site is contributed by glutamine 108. The 270-residue stretch at 111 to 380 (PYGISQIKAP…KGLINVQAAA (270 aa)) folds into the Peptidase S8 domain. The Charge relay system role is filled by aspartate 138. Residue aspartate 147 coordinates Ca(2+). The Charge relay system role is filled by histidine 170. 7 residues coordinate Ca(2+): leucine 181, asparagine 183, isoleucine 185, valine 187, alanine 275, tyrosine 277, and threonine 280. The active-site Charge relay system is serine 327.

The protein belongs to the peptidase S8 family. Ca(2+) is required as a cofactor.

It localises to the secreted. It carries out the reaction Hydrolysis of proteins with broad specificity for peptide bonds, and a preference for a large uncharged residue in P1. Hydrolyzes peptide amides.. Functionally, subtilisin is an extracellular alkaline serine protease, it catalyzes the hydrolysis of proteins and peptide amides. This Bacillus subtilis subsp. amylosacchariticus protein is Subtilisin amylosacchariticus (apr).